Consider the following 957-residue polypeptide: Protein CRT10 (957 aa).

Residues 695–719 are disordered; the sequence is NSTEEDDVNSDPENEESGSSLTSFQ. Residues 697 to 710 are compositionally biased toward acidic residues; it reads TEEDDVNSDPENEE. A Phosphoserine modification is found at S704.

In terms of assembly, component of a cullin-RING ligase (CRL) composed of 4 subunits: the RING protein HRT1, the cullin RTT101, a linker protein MMS1, and the substrate receptor CRT10. Interacts with MMS1.

Substrate targeting component of a cullin-RING-based E3 ubiquitin-protein ligase complex RTT101(MMS1-CRT10). RTT101(MMS1-CRT10) may regulate nucleotide synthesis through transcriptional regulation of RNR genes encoding ribonucleotide reductases. This chain is Protein CRT10 (CRT10), found in Saccharomyces cerevisiae (strain ATCC 204508 / S288c) (Baker's yeast).